Here is a 324-residue protein sequence, read N- to C-terminus: 6-methylsalicylic acid decarboxylase (324 aa).

Positions 7, 9, 157, and 274 each coordinate Zn(2+).

Belongs to the metallo-dependent hydrolases superfamily. ACMSD family. In terms of assembly, monomer.

It is found in the cytoplasm. It localises to the cytosol. It carries out the reaction 6-methylsalicylate + H(+) = 3-methylphenol + CO2. The protein operates within mycotoxin biosynthesis; patulin biosynthesis. 6-methylsalicylic acid decarboxylase; part of the gene cluster that mediates the biosynthesis of patulin, an acetate-derived tetraketide mycotoxin produced by several fungal species that shows antimicrobial properties against several bacteria. PatG catalyzes the decarboxylation of 6-methylsalicylic acid to yield m-cresol. The pathway begins with the synthesis of 6-methylsalicylic acid by the polyketide synthase (PKS) patK via condensation of acetate and malonate units. The 6-methylsalicylic acid decarboxylase patG then catalyzes the decarboxylation of 6-methylsalicylic acid to yield m-cresol (also known as 3-methylphenol). These first reactions occur in the cytosol. The intermediate m-cresol is then transported into the endoplasmic reticulum where the cytochrome P450 monooxygenase patH converts it to m-hydroxybenzyl alcohol, which is further converted to gentisyl alcohol by the cytochrome P450 monooxygenase patI. The oxidoreductases patJ and patO further convert gentisyl alcohol to isoepoxydon in the vacuole. PatN catalyzes then the transformation of isoepoxydon into phyllostine. The cluster protein patF is responsible for the conversion from phyllostine to neopatulin whereas the alcohol dehydrogenase patD converts neopatulin to E-ascladiol. The steps between isoepoxydon and E-ascladiol occur in the cytosol, and E-ascladiol is probably secreted to the extracellular space by one of the cluster-specific transporters patC or patM. Finally, the secreted patulin synthase patE catalyzes the conversion of E-ascladiol to patulin. In Penicillium expansum (Blue mold rot fungus), this protein is 6-methylsalicylic acid decarboxylase.